The chain runs to 219 residues: GTP cyclohydrolase-2 (219 aa).

A GTP-binding site is contributed by 51–55; it reads RIHSE. Positions 56, 67, and 69 each coordinate Zn(2+). Residues glutamine 72, 94–96, and threonine 116 each bind GTP; that span reads EGR. Aspartate 128 functions as the Proton acceptor in the catalytic mechanism. Arginine 130 serves as the catalytic Nucleophile. Residues threonine 151 and lysine 156 each contribute to the GTP site.

Belongs to the GTP cyclohydrolase II family. The cofactor is Zn(2+).

It catalyses the reaction GTP + 4 H2O = 2,5-diamino-6-hydroxy-4-(5-phosphoribosylamino)-pyrimidine + formate + 2 phosphate + 3 H(+). Its pathway is cofactor biosynthesis; riboflavin biosynthesis; 5-amino-6-(D-ribitylamino)uracil from GTP: step 1/4. Its function is as follows. Catalyzes the conversion of GTP to 2,5-diamino-6-ribosylamino-4(3H)-pyrimidinone 5'-phosphate (DARP), formate and pyrophosphate. The chain is GTP cyclohydrolase-2 from Pasteurella multocida (strain Pm70).